A 454-amino-acid polypeptide reads, in one-letter code: Chromosomal replication initiator protein DnaA (454 aa).

Residues 1–74 are domain I, interacts with DnaA modulators; the sequence is MFDLDKFWQF…IQEAYAYADM (74 aa). The tract at residues 74–116 is domain II; sequence MEIQPKFEVAGKEGPERLVTPQPRIKTNQEILENRRDEFAQDL. Residues 117-333 are domain III, AAA+ region; that stretch reads QLNSKYTFDT…GALVKVQAHA (217 aa). ATP is bound by residues G161, G163, K164, and T165. The tract at residues 334 to 454 is domain IV, binds dsDNA; sequence TIEREDINVD…VYDLKAMLEH (121 aa).

The protein belongs to the DnaA family. Oligomerizes as a right-handed, spiral filament on DNA at oriC.

It localises to the cytoplasm. Its function is as follows. Plays an essential role in the initiation and regulation of chromosomal replication. ATP-DnaA binds to the origin of replication (oriC) to initiate formation of the DNA replication initiation complex once per cell cycle. Binds the DnaA box (a 9 base pair repeat at the origin) and separates the double-stranded (ds)DNA. Forms a right-handed helical filament on oriC DNA; dsDNA binds to the exterior of the filament while single-stranded (ss)DNA is stabiized in the filament's interior. The ATP-DnaA-oriC complex binds and stabilizes one strand of the AT-rich DNA unwinding element (DUE), permitting loading of DNA polymerase. After initiation quickly degrades to an ADP-DnaA complex that is not apt for DNA replication. Binds acidic phospholipids. This Lactobacillus johnsonii (strain CNCM I-12250 / La1 / NCC 533) protein is Chromosomal replication initiator protein DnaA.